The sequence spans 593 residues: Lipolysis-stimulated lipoprotein receptor (593 aa).

Positions 1-35 are cleaved as a signal peptide; sequence MAPAAGACAGAPDSHPATVVFVCLFLIIFCPDPAS. The Extracellular portion of the chain corresponds to 36–206; it reads AIQVTVSDPY…PGFRAGPLED (171 aa). One can recognise an Ig-like V-type domain in the interval 89-181; sequence PASVDNQLNA…DLDGNNEAYA (93 aa). An intrachain disulfide couples cysteine 113 to cysteine 165. The helical transmembrane segment at 207–227 threads the bilayer; that stretch reads WLFVVVVCLASLLLFLLLGIC. The Cytoplasmic portion of the chain corresponds to 228–593; it reads WCQCCPHTCC…LALSRESLVV (366 aa). Position 283 is a phosphothreonine (threonine 283). Serine 308, serine 314, serine 332, serine 375, and serine 379 each carry phosphoserine. Residues 375–387 show a composition bias toward basic and acidic residues; sequence SEVTSLHEDDWRS. Positions 375 to 578 are disordered; the sequence is SEVTSLHEDD…ETDSQASRER (204 aa). Position 396 is a phosphothreonine (threonine 396). Residues serine 407, serine 410, and serine 436 each carry the phosphoserine modification. Positions 435–444 are enriched in basic and acidic residues; that stretch reads RSVDALDDIN. Low complexity predominate over residues 445-460; sequence RPGSTESGRSSPPSSG. A phosphoserine mark is found at serine 471 and serine 473. Positions 472–550 are enriched in basic and acidic residues; that stretch reads RSRDDLYDPD…GSGERRRVYR (79 aa). Tyrosine 478 is modified (phosphotyrosine). At serine 575 the chain carries Phosphoserine. Lysine 582 is covalently cross-linked (Glycyl lysine isopeptide (Lys-Gly) (interchain with G-Cter in ubiquitin)). Phosphoserine occurs at positions 587 and 590.

The protein belongs to the immunoglobulin superfamily. LISCH7 family. As to quaternary structure, homotrimer or homotetramer constituted of isoform 1 and/or isoform 2 and isoform 3. Assembles into cell-cell contacts. Interacts (via the cytoplasmic domain) with MARVELD2 (via C-terminal cytoplasmic domain); the interaction is required to recruit MARVELD2 to tricellular contacts. Interacts with OCLN. Post-translationally, phosphorylation at Ser-308 by MAPK8/JNK1 and MAPK9/JNK2 may be required for exclusive localization at tricellular tight junstions. Polyubiquitinated at Lys-582 via 'Lys-63'-linked ubiquitin chains; deubiquitinated by USP53. In terms of tissue distribution, specifically expressed in liver. Also detected in kidney and lung.

It localises to the cell membrane. Its subcellular location is the cell junction. It is found in the tight junction. Probable role in the clearance of triglyceride-rich lipoprotein from blood. Binds chylomicrons, LDL and VLDL in presence of free fatty acids and allows their subsequent uptake in the cells. Maintains epithelial barrier function by recruiting MARVELD2/tricellulin to tricellular tight junctions. This Rattus norvegicus (Rat) protein is Lipolysis-stimulated lipoprotein receptor.